Here is an 86-residue protein sequence, read N- to C-terminus: Protein IDA-LIKE 1 (86 aa).

A signal peptide spans 1-27; it reads MNLSHKTMFMTLYIVFLLIFGSYNATA.

Expressed in roots.

It localises to the secreted. It is found in the extracellular space. Functionally, involved in an ethylene-independent separation step of floral abscission. May act with RLK5 and HSL2 as ligand-receptor pairs. The polypeptide is Protein IDA-LIKE 1 (IDL1) (Arabidopsis thaliana (Mouse-ear cress)).